We begin with the raw amino-acid sequence, 37 residues long: Large ribosomal subunit protein bL36c (37 aa).

Belongs to the bacterial ribosomal protein bL36 family.

It is found in the plastid. The protein localises to the chloroplast. This is Large ribosomal subunit protein bL36c from Staurastrum punctulatum (Green alga).